A 162-amino-acid chain; its full sequence is NADH-quinone oxidoreductase subunit I (162 aa).

4Fe-4S ferredoxin-type domains lie at 53-83 (LRRY…IDSE) and 93-122 (TRYD…ETRI). Residues cysteine 63, cysteine 66, cysteine 69, cysteine 73, cysteine 102, cysteine 105, cysteine 108, and cysteine 112 each contribute to the [4Fe-4S] cluster site.

The protein belongs to the complex I 23 kDa subunit family. In terms of assembly, NDH-1 is composed of 14 different subunits. Subunits NuoA, H, J, K, L, M, N constitute the membrane sector of the complex. [4Fe-4S] cluster serves as cofactor.

Its subcellular location is the cell inner membrane. The catalysed reaction is a quinone + NADH + 5 H(+)(in) = a quinol + NAD(+) + 4 H(+)(out). NDH-1 shuttles electrons from NADH, via FMN and iron-sulfur (Fe-S) centers, to quinones in the respiratory chain. The immediate electron acceptor for the enzyme in this species is believed to be ubiquinone. Couples the redox reaction to proton translocation (for every two electrons transferred, four hydrogen ions are translocated across the cytoplasmic membrane), and thus conserves the redox energy in a proton gradient. In Thiobacillus denitrificans (strain ATCC 25259 / T1), this protein is NADH-quinone oxidoreductase subunit I.